The chain runs to 405 residues: Cytochrome P450 109 (405 aa).

Cys351 lines the heme pocket.

The protein belongs to the cytochrome P450 family. Heme is required as a cofactor.

Cytochromes P450 are a group of heme-thiolate monooxygenases. They oxidize a variety of structurally unrelated compounds, including steroids, fatty acids, and xenobiotics. The chain is Cytochrome P450 109 (cyp109) from Bacillus spizizenii (strain ATCC 23059 / NRRL B-14472 / W23) (Bacillus subtilis subsp. spizizenii).